A 352-amino-acid chain; its full sequence is N-terminal EF-hand calcium-binding protein 1 (352 aa).

A Phosphoserine modification is found at Ser4. EF-hand domains are found at residues 26 to 61 (KGMS…GVLS) and 60 to 95 (LSGE…HLGE). Positions 39, 41, 43, 45, and 50 each coordinate Ca(2+). The stretch at 135–163 (LLKETLNQLQSLQNSLECAMETTEEQTRQ) forms a coiled coil. The tract at residues 155–202 (ETTEEQTRQERQGPSKPEVLSIQWPGKRSSRRVQRHNSFSPNSPQFNV) is disordered. Over residues 190–202 (HNSFSPNSPQFNV) the composition is skewed to polar residues. Phosphoserine occurs at positions 192 and 197. Positions 209–275 (EEDNQWMTQI…EEFQLALKHY (67 aa)) form a coiled coil. In terms of domain architecture, ABM spans 252 to 340 (MLVQRQMSVT…LETPELTSTM (89 aa)).

In terms of assembly, interacts with STX1. May interact with CPNE6. As to expression, expressed in brain (at protein level). Expressed in the cerebral cortex only in layer 4, thalamic nuclei (the mediodorsal nucleus), hippocampus (a small band of pyramidal neurons at the boundary between CA1 and CA3), interneurons interspersed throughout the hippocampus proper, interneurons in the hilus, bodies of the neurons but also their dendritic projections (at protein level).

The protein localises to the cytoplasm. The polypeptide is N-terminal EF-hand calcium-binding protein 1 (Necab1) (Mus musculus (Mouse)).